A 347-amino-acid chain; its full sequence is Holliday junction branch migration complex subunit RuvB (347 aa).

Residues 4–185 (TDRLITPAPL…FGIISRLEFY (182 aa)) are large ATPase domain (RuvB-L). ATP-binding positions include Leu-24, Arg-25, Gly-66, Lys-69, Thr-70, Thr-71, 132–134 (EDY), Arg-175, Tyr-185, and Arg-222. Thr-70 is a Mg(2+) binding site. A small ATPAse domain (RuvB-S) region spans residues 186–256 (SVEELTQIVM…VADAALLMLD (71 aa)). The interval 259 to 347 (AIGLDVMDRK…LSADLWDEKQ (89 aa)) is head domain (RuvB-H). DNA contacts are provided by Arg-295, Arg-314, and Arg-319.

Belongs to the RuvB family. Homohexamer. Forms an RuvA(8)-RuvB(12)-Holliday junction (HJ) complex. HJ DNA is sandwiched between 2 RuvA tetramers; dsDNA enters through RuvA and exits via RuvB. An RuvB hexamer assembles on each DNA strand where it exits the tetramer. Each RuvB hexamer is contacted by two RuvA subunits (via domain III) on 2 adjacent RuvB subunits; this complex drives branch migration. In the full resolvosome a probable DNA-RuvA(4)-RuvB(12)-RuvC(2) complex forms which resolves the HJ.

It is found in the cytoplasm. The enzyme catalyses ATP + H2O = ADP + phosphate + H(+). The RuvA-RuvB-RuvC complex processes Holliday junction (HJ) DNA during genetic recombination and DNA repair, while the RuvA-RuvB complex plays an important role in the rescue of blocked DNA replication forks via replication fork reversal (RFR). RuvA specifically binds to HJ cruciform DNA, conferring on it an open structure. The RuvB hexamer acts as an ATP-dependent pump, pulling dsDNA into and through the RuvAB complex. RuvB forms 2 homohexamers on either side of HJ DNA bound by 1 or 2 RuvA tetramers; 4 subunits per hexamer contact DNA at a time. Coordinated motions by a converter formed by DNA-disengaged RuvB subunits stimulates ATP hydrolysis and nucleotide exchange. Immobilization of the converter enables RuvB to convert the ATP-contained energy into a lever motion, pulling 2 nucleotides of DNA out of the RuvA tetramer per ATP hydrolyzed, thus driving DNA branch migration. The RuvB motors rotate together with the DNA substrate, which together with the progressing nucleotide cycle form the mechanistic basis for DNA recombination by continuous HJ branch migration. Branch migration allows RuvC to scan DNA until it finds its consensus sequence, where it cleaves and resolves cruciform DNA. The protein is Holliday junction branch migration complex subunit RuvB of Nitrosospira multiformis (strain ATCC 25196 / NCIMB 11849 / C 71).